The primary structure comprises 798 residues: Integrin beta-7 (798 aa).

An N-terminal signal peptide occupies residues Met1 to Ser19. At Glu20 to His723 the chain is on the extracellular side. The PSI domain maps to Ser44–Pro92. Disulfide bonds link Cys51–Cys476, Cys54–Cys80, Cys64–Cys91, Cys216–Cys223, Cys271–Cys311, Cys412–Cys428, and Cys448–Cys474. N-linked (GlcNAc...) asparagine glycosylation is present at Asn68. Positions Glu98–Ala124 are disordered. Residues Tyr150–Leu389 enclose the VWFA domain. Mg(2+) is bound by residues Ser161 and Ser163. Ser163, Asp166, Asp167, and Asp198 together coordinate Ca(2+). Ca(2+) is bound by residues Asn254, Asp256, Pro258, and Glu259. Glu259 lines the Mg(2+) pocket. Asn279 carries N-linked (GlcNAc...) asparagine glycosylation. Ca(2+)-binding residues include Asp289 and Glu373. Residue Asn434 is glycosylated (N-linked (GlcNAc...) asparagine). A glycan (N-linked (GlcNAc...) asparagine) is linked at Asn477. 19 cysteine pairs are disulfide-bonded: Cys478–Cys497, Cys488–Cys500, Cys502–Cys511, Cys513–Cys545, Cys527–Cys543, Cys537–Cys548, Cys550–Cys559, Cys561–Cys582, Cys566–Cys580, Cys574–Cys585, Cys587–Cys596, Cys598–Cys621, Cys605–Cys619, Cys613–Cys624, Cys626–Cys635, Cys638–Cys641, Cys645–Cys688, Cys651–Cys670, and Cys654–Cys666. I-EGF domains are found at residues Cys478–Glu512, Cys513–Glu560, Cys561–Glu597, and Cys598–Asp636. The N-linked (GlcNAc...) asparagine glycan is linked to Asn531. Asn590 carries N-linked (GlcNAc...) asparagine glycosylation. Residues Asn665 and Asn674 are each glycosylated (N-linked (GlcNAc...) asparagine). A helical membrane pass occupies residues Thr724–Tyr746. The Cytoplasmic segment spans residues Arg747 to Leu798. Phosphotyrosine; by Tyr-kinases is present on Tyr778.

Belongs to the integrin beta chain family. Heterodimer of an alpha and a beta subunit. ITGB7/beta-7 associates with either ITGA4/alpha-4 or ITGAE/alpha-E. Integrin ITGA4/ITGB7 interacts with MADCAM1. Integrin ITGA4/ITGB7 interacts with VCAM1 and fibronectin. Interacts with FLNA (via filamin repeats 4, 9, 12, 17, 19, 21, and 23). As to quaternary structure, (Microbial infection) May interact with HIV-1 gp120. In terms of tissue distribution, expressed in a variety of leukocyte lines.

The protein resides in the cell membrane. Integrin ITGA4/ITGB7 (alpha-4/beta-7) (Peyer patches-specific homing receptor LPAM-1) is an adhesion molecule that mediates lymphocyte migration and homing to gut-associated lymphoid tissue (GALT). Integrin ITGA4/ITGB7 interacts with the cell surface adhesion molecules MADCAM1 which is normally expressed by the vascular endothelium of the gastrointestinal tract. Also interacts with VCAM1 and fibronectin, an extracellular matrix component. It recognizes one or more domains within the alternatively spliced CS-1 region of fibronectin. Interactions involve the tripeptide L-D-T in MADCAM1, and L-D-V in fibronectin. Integrin ITGAE/ITGB7 (alpha-E/beta-7, HML-1) is a receptor for E-cadherin. Functionally, (Microbial infection) Binds to HIV-1 gp120, thereby allowing the virus to enter GALT, which is thought to be the major trigger of AIDS disease. Interaction would involve a tripeptide L-D-I in HIV-1 gp120. The sequence is that of Integrin beta-7 (ITGB7) from Homo sapiens (Human).